The primary structure comprises 242 residues: uncharacterized protein (242 aa).

Residues 2 to 62 (EKAYKLLSVQ…VEKPSVIFED (61 aa)) enclose the S4 RNA-binding domain. The active site involves Asp93.

This sequence belongs to the pseudouridine synthase RluA family.

The enzyme catalyses a uridine in RNA = a pseudouridine in RNA. This is an uncharacterized protein from Helicobacter pylori (strain J99 / ATCC 700824) (Campylobacter pylori J99).